Consider the following 226-residue polypeptide: V-type proton ATPase subunit E (226 aa).

Belongs to the V-ATPase E subunit family. In terms of assembly, V-ATPase is a heteromultimeric enzyme composed of a peripheral catalytic V1 complex (components A to H) attached to an integral membrane V0 proton pore complex (components: a, c, c', c'' and d).

In terms of biological role, subunit of the peripheral V1 complex of vacuolar ATPase essential for assembly or catalytic function. V-ATPase is responsible for acidifying a variety of intracellular compartments in eukaryotic cells. This Mesembryanthemum crystallinum (Common ice plant) protein is V-type proton ATPase subunit E (VATE).